Reading from the N-terminus, the 274-residue chain is Small ribosomal subunit protein uS2 (274 aa).

The protein belongs to the universal ribosomal protein uS2 family.

This Syntrophobacter fumaroxidans (strain DSM 10017 / MPOB) protein is Small ribosomal subunit protein uS2.